We begin with the raw amino-acid sequence, 609 residues long: Protein alan shepard (609 aa).

Positions 1–12 (MHPRYSPAPPPL) are enriched in pro residues. Residues 1–96 (MHPRYSPAPP…ASVAAAPPTP (96 aa)) are disordered. At Tyr-5 the chain carries Phosphotyrosine. Over residues 13–35 (HQQQQQQPPQQQQQQMGGPHQQQ) the composition is skewed to low complexity. Over residues 37-50 (GGVGPGTGHGGVGA) the composition is skewed to gly residues. Low complexity-rich tracts occupy residues 51–68 (AVGA…NSQQ) and 83–92 (SSSAASVAAA). A phosphotyrosine mark is found at Tyr-152 and Tyr-168. Residues 190–252 (PATTTYGQRV…AQNQNQQGGE (63 aa)) form a disordered region. Residues 204–252 (SPSNTNSSSSSNTGSQSGTLSTSLSNTTNTNTTMGPNGTAQNQNQQGGE) are compositionally biased toward low complexity. RRM domains follow at residues 257–330 (TNLY…MAKQ) and 336–415 (TNLY…FADG). Residues 583 to 609 (MTDSEQASTAASPDEAYTQYPHQAAPK) form a disordered region.

Functionally, has a role in the perception of gravity. The sequence is that of Protein alan shepard from Drosophila grimshawi (Hawaiian fruit fly).